We begin with the raw amino-acid sequence, 881 residues long: Alanine--tRNA ligase (881 aa).

Positions 568, 572, 670, and 674 each coordinate Zn(2+).

Belongs to the class-II aminoacyl-tRNA synthetase family. It depends on Zn(2+) as a cofactor.

The protein resides in the cytoplasm. It catalyses the reaction tRNA(Ala) + L-alanine + ATP = L-alanyl-tRNA(Ala) + AMP + diphosphate. In terms of biological role, catalyzes the attachment of alanine to tRNA(Ala) in a two-step reaction: alanine is first activated by ATP to form Ala-AMP and then transferred to the acceptor end of tRNA(Ala). Also edits incorrectly charged Ser-tRNA(Ala) and Gly-tRNA(Ala) via its editing domain. The chain is Alanine--tRNA ligase from Moorella thermoacetica (strain ATCC 39073 / JCM 9320).